The chain runs to 238 residues: Flagellar L-ring protein (238 aa).

An N-terminal signal peptide occupies residues 1–16 (MNKAILAVAMVLLLAG). C17 carries the N-palmitoyl cysteine lipid modification. C17 carries S-diacylglycerol cysteine lipidation.

It belongs to the FlgH family. In terms of assembly, the basal body constitutes a major portion of the flagellar organelle and consists of four rings (L,P,S, and M) mounted on a central rod.

It localises to the cell outer membrane. The protein resides in the bacterial flagellum basal body. Functionally, assembles around the rod to form the L-ring and probably protects the motor/basal body from shearing forces during rotation. The polypeptide is Flagellar L-ring protein (Brucella abortus (strain 2308)).